Consider the following 396-residue polypeptide: Ribosomal RNA large subunit methyltransferase I (396 aa).

One can recognise a PUA domain in the interval 2 to 81; that stretch reads TVRLILAKGR…EVIDCAFFIR (80 aa).

The protein belongs to the methyltransferase superfamily. RlmI family.

It is found in the cytoplasm. The catalysed reaction is cytidine(1962) in 23S rRNA + S-adenosyl-L-methionine = 5-methylcytidine(1962) in 23S rRNA + S-adenosyl-L-homocysteine + H(+). Its function is as follows. Specifically methylates the cytosine at position 1962 (m5C1962) of 23S rRNA. The chain is Ribosomal RNA large subunit methyltransferase I from Yersinia pestis bv. Antiqua (strain Antiqua).